The chain runs to 137 residues: ATP synthase epsilon chain 1 (137 aa).

The protein belongs to the ATPase epsilon chain family. F-type ATPases have 2 components, CF(1) - the catalytic core - and CF(0) - the membrane proton channel. CF(1) has five subunits: alpha(3), beta(3), gamma(1), delta(1), epsilon(1). CF(0) has three main subunits: a, b and c.

It localises to the cell inner membrane. In terms of biological role, produces ATP from ADP in the presence of a proton gradient across the membrane. This chain is ATP synthase epsilon chain 1 (atpC1), found in Ralstonia nicotianae (strain ATCC BAA-1114 / GMI1000) (Ralstonia solanacearum).